The chain runs to 314 residues: Serine/threonine-protein phosphatase SIT4 (314 aa).

Mn(2+) contacts are provided by Asp-53, His-55, Asp-85, and Asn-117. The active-site Proton donor is His-118. His-167 and His-241 together coordinate Mn(2+).

This sequence belongs to the PPP phosphatase family. PP-6 (PP-V) subfamily. Interacts with MDS3. Mn(2+) is required as a cofactor.

It is found in the cytoplasm. It carries out the reaction O-phospho-L-seryl-[protein] + H2O = L-seryl-[protein] + phosphate. The catalysed reaction is O-phospho-L-threonyl-[protein] + H2O = L-threonyl-[protein] + phosphate. Functionally, serine/threonine protein phosphatase which is involved in the dephosphorylation of the large subunit of RNA polymerase II. Is required in late G1 for normal G1 cyclin expression, bud initiation and expression of certain genes that are periodically expressed during late G1. Plays a role during hyphal growth through the regulation of cell wall biogenesis, osmosensing and protein translation. Involved in virulence in a mouse systemic infection model. This is Serine/threonine-protein phosphatase SIT4 (SIT4) from Candida albicans (strain SC5314 / ATCC MYA-2876) (Yeast).